Reading from the N-terminus, the 293-residue chain is Nucleotide-binding protein OB2468 (293 aa).

14–21 (GMSGAGKT) serves as a coordination point for ATP. 65 to 68 (DLRG) contributes to the GTP binding site.

The protein belongs to the RapZ-like family.

In terms of biological role, displays ATPase and GTPase activities. The chain is Nucleotide-binding protein OB2468 from Oceanobacillus iheyensis (strain DSM 14371 / CIP 107618 / JCM 11309 / KCTC 3954 / HTE831).